Here is a 445-residue protein sequence, read N- to C-terminus: Argininosuccinate synthase (445 aa).

ATP contacts are provided by residues 17 to 25 (AFSGGLDTS) and alanine 43. An L-citrulline-binding site is contributed by tyrosine 99. Glycine 129 and threonine 131 together coordinate ATP. The L-aspartate site is built by threonine 131, asparagine 135, and aspartate 136. L-citrulline is bound at residue asparagine 135. Aspartate 136 provides a ligand contact to ATP. Positions 139 and 192 each coordinate L-citrulline. Aspartate 194 lines the ATP pocket. 3 residues coordinate L-citrulline: threonine 201, glutamate 203, and glutamate 280.

Belongs to the argininosuccinate synthase family. Type 2 subfamily. As to quaternary structure, homotetramer.

It is found in the cytoplasm. It catalyses the reaction L-citrulline + L-aspartate + ATP = 2-(N(omega)-L-arginino)succinate + AMP + diphosphate + H(+). It participates in amino-acid biosynthesis; L-arginine biosynthesis; L-arginine from L-ornithine and carbamoyl phosphate: step 2/3. This chain is Argininosuccinate synthase, found in Herminiimonas arsenicoxydans.